Reading from the N-terminus, the 501-residue chain is Aerobic glycerol-3-phosphate dehydrogenase (501 aa).

5–33 (DLIVIGGGINGAGIAADAAGRGLSVLMLE) contributes to the FAD binding site.

Belongs to the FAD-dependent glycerol-3-phosphate dehydrogenase family. It depends on FAD as a cofactor.

The protein localises to the cytoplasm. It catalyses the reaction a quinone + sn-glycerol 3-phosphate = dihydroxyacetone phosphate + a quinol. Its pathway is polyol metabolism; glycerol degradation via glycerol kinase pathway; glycerone phosphate from sn-glycerol 3-phosphate (aerobic route): step 1/1. Its function is as follows. Conversion of glycerol 3-phosphate to dihydroxyacetone. Uses molecular oxygen or nitrate as electron acceptor. This Escherichia coli (strain K12) protein is Aerobic glycerol-3-phosphate dehydrogenase (glpD).